The sequence spans 295 residues: Serpentine receptor class gamma-53 (295 aa).

The next 6 helical transmembrane spans lie at 7-27 (IWLC…VLLS), 39-61 (VITM…RMVF), 121-141 (FYLL…QLLY), 173-193 (CFMS…LYQV), 211-230 (MSLI…AWQT), and 241-261 (IELL…ILLI).

Belongs to the nematode receptor-like protein srg family.

It is found in the membrane. The polypeptide is Serpentine receptor class gamma-53 (srg-53) (Caenorhabditis elegans).